A 222-amino-acid chain; its full sequence is DUF1769 family protein (222 aa).

Belongs to the UPF0590 family.

The protein resides in the cytoplasm. The protein localises to the nucleus. This Schizosaccharomyces pombe (strain 972 / ATCC 24843) (Fission yeast) protein is DUF1769 family protein.